The following is a 415-amino-acid chain: Dynein assembly factor with WD repeat domains 1 (415 aa).

8 WD repeats span residues 90–129, 132–174, 175–214, 217–256, 259–298, 301–340, 343–384, and 386–415; these read AHIL…ELHT, GHRN…HTFR, GHTA…EVVT, GHLA…KVHT, GHCA…CVAT, GHDD…CITK, GHEG…QVLE, and HTDE…RIWR.

It belongs to the WD repeat WDR69 family. Interacts with IFT46.

It localises to the cytoplasm. The protein resides in the cytoskeleton. Its subcellular location is the flagellum basal body. It is found in the flagellum axoneme. Functionally, required for axonemal dynein assembly and ciliary motility in ciliated organs, including Kupffer's vesicle, during embryogenesis. Facilitates the onset of robust cilia motility during development. This chain is Dynein assembly factor with WD repeat domains 1 (Daw1), found in Rattus norvegicus (Rat).